A 425-amino-acid chain; its full sequence is 26S proteasome regulatory subunit 7 (425 aa).

Position 208–215 (208–215 (GPPGTGKT)) interacts with ATP.

It belongs to the AAA ATPase family.

It is found in the cytoplasm. Its subcellular location is the nucleus. The 26S proteasome is involved in the ATP-dependent degradation of ubiquitinated proteins. The regulatory (or ATPase) complex confers ATP dependency and substrate specificity to the 26S complex. This Prunus persica (Peach) protein is 26S proteasome regulatory subunit 7 (RPT1).